The sequence spans 382 residues: Gap junction alpha-1 protein (382 aa).

Residues 2–23 (GDWSALGKLLDKVQAYSTAGGK) lie on the Cytoplasmic side of the membrane. Position 5 is a phosphoserine (serine 5). Residues 24-44 (VWLSVLFIFRILLLGTAVESA) traverse the membrane as a helical segment. Over 45–76 (WGDEQSAFRCNTQQPGCENVCYDKSFPISHVR) the chain is Extracellular. 2 disulfide bridges follow: cysteine 54–cysteine 192 and cysteine 187–cysteine 198. Residues 77–97 (FWVLQIIFVSVPTLLYLAHVF) form a helical membrane-spanning segment. The Cytoplasmic portion of the chain corresponds to 98-155 (YVMRKEEKLNKKEEELKVAQTDGVNVEMHLKQIEIKKFKYGIEEHGKVKMRGGLLRTY). Lysine 144 participates in a covalent cross-link: Glycyl lysine isopeptide (Lys-Gly) (interchain with G-Cter in SUMO). The chain crosses the membrane as a helical span at residues 156–176 (IISILFKSVFEVAFLLIQWYI). At 177–207 (YGFSLSAVYTCKRDPCPHQVDCFLSRPTEKT) the chain is on the extracellular side. Residues 208–228 (IFIIFMLVVSLVSLALNIIEL) form a helical membrane-spanning segment. The Cytoplasmic segment spans residues 229–382 (FYVFFKGVKD…SRPRPDDLEI (154 aa)). Residue lysine 237 forms a Glycyl lysine isopeptide (Lys-Gly) (interchain with G-Cter in SUMO) linkage. An interaction with NOV region spans residues 244–382 (SDPYHATTGP…SRPRPDDLEI (139 aa)). Tyrosine 247 is subject to Phosphotyrosine. Serine 255, serine 257, and serine 262 each carry phosphoserine. An interaction with UBQLN4 region spans residues 264-382 (KYAYFNGCSS…SRPRPDDLEI (119 aa)). Cysteine 271 carries the S-nitrosocysteine modification. Threonine 275 bears the Phosphothreonine mark. Phosphoserine occurs at positions 306, 314, and 325. Residues 317–332 (QNRMGQAGSTISNSHA) show a composition bias toward polar residues. A disordered region spans residues 317-382 (QNRMGQAGST…SRPRPDDLEI (66 aa)). Threonine 326 carries the phosphothreonine modification. Phosphoserine is present on residues serine 328, serine 330, serine 341, and serine 365. Low complexity predominate over residues 362–374 (RPSSRASSRASSR). The residue at position 368 (serine 368) is a Phosphoserine; by PKC/PRKCG and PKC/PRKCD. Serine 369 and serine 373 each carry phosphoserine.

The protein belongs to the connexin family. Alpha-type (group II) subfamily. As to quaternary structure, a connexon is composed of a hexamer of connexins. Interacts with CSNK1D. Interacts with RIC1/CIP150. Interacts (via C-terminus) with TJP1. Interacts (via C-terminus) with SRC (via SH3 domain). Interacts (not ubiquitinated) with UBQLN4 (via UBA domain). Interacts with CNST. Interacts with SGSM3. Interacts with NOV. Interacts with TMEM65. Interacts with ANK3/ANKG and PKP2. In terms of processing, phosphorylation at Ser-325, Ser-328 and Ser-330 by CK1 modulates gap junction assembly. Phosphorylated at Ser-368 by PRKCG; phosphorylation induces disassembly of gap junction plaques and inhibition of gap junction activity. Phosphorylation at Ser-368 by PRKCD triggers its internalization into small vesicles leading to proteasome-mediated degradation. Sumoylated with SUMO1, SUMO2 and SUMO3, which may regulate the level of functional Cx43 gap junctions at the plasma membrane. May be desumoylated by SENP1 or SENP2. Post-translationally, acetylated in the developing cortex; leading to delocalization from the cell membrane. In terms of processing, S-nitrosylation at Cys-271 is enriched at the muscle endothelial gap junction in arteries, it augments channel permeability and may regulate of smooth muscle cell to endothelial cell communication. Expressed in heart, non-sensory epithelial cells, and in fibrocytes of the spiral ligament and the spiral limbus. Expressed in bladder smooth muscle cells (at protein level). Expressed in astrocytes (at protein level).

The protein resides in the cell membrane. The protein localises to the cell junction. It is found in the gap junction. It localises to the endoplasmic reticulum. In terms of biological role, gap junction protein that acts as a regulator of bladder capacity. A gap junction consists of a cluster of closely packed pairs of transmembrane channels, the connexons, through which materials of low MW diffuse from one cell to a neighboring cell. Negative regulator of bladder functional capacity: acts by enhancing intercellular electrical and chemical transmission, thus sensitizing bladder muscles to cholinergic neural stimuli and causing them to contract. May play a role in cell growth inhibition through the regulation of NOV expression and localization. Plays an essential role in gap junction communication in the ventricles. Connexin 43 is possibly the ATP-induced pore of mouse macrophages. This chain is Gap junction alpha-1 protein (Gja1), found in Mus musculus (Mouse).